We begin with the raw amino-acid sequence, 216 residues long: 3-isopropylmalate dehydratase small subunit 1 (216 aa).

This sequence belongs to the LeuD family. LeuD type 1 subfamily. In terms of assembly, heterodimer of LeuC and LeuD.

The enzyme catalyses (2R,3S)-3-isopropylmalate = (2S)-2-isopropylmalate. Its pathway is amino-acid biosynthesis; L-leucine biosynthesis; L-leucine from 3-methyl-2-oxobutanoate: step 2/4. Catalyzes the isomerization between 2-isopropylmalate and 3-isopropylmalate, via the formation of 2-isopropylmaleate. The protein is 3-isopropylmalate dehydratase small subunit 1 of Bordetella bronchiseptica (strain ATCC BAA-588 / NCTC 13252 / RB50) (Alcaligenes bronchisepticus).